The primary structure comprises 514 residues: Putative selenium-binding protein (514 aa).

It belongs to the selenium-binding protein family.

This chain is Putative selenium-binding protein, found in Caenorhabditis briggsae.